We begin with the raw amino-acid sequence, 324 residues long: Quinolinate synthase 2 (324 aa).

Iminosuccinate contacts are provided by His48 and Ser66. Cys111 provides a ligand contact to [4Fe-4S] cluster. Iminosuccinate is bound by residues 137–139 (YVN) and Ser154. Cys196 lines the [4Fe-4S] cluster pocket. Iminosuccinate contacts are provided by residues 222-224 (HPE) and Thr239. A [4Fe-4S] cluster-binding site is contributed by Cys282.

It belongs to the quinolinate synthase family. Type 2 subfamily. It depends on [4Fe-4S] cluster as a cofactor.

Its subcellular location is the cytoplasm. It carries out the reaction iminosuccinate + dihydroxyacetone phosphate = quinolinate + phosphate + 2 H2O + H(+). Its pathway is cofactor biosynthesis; NAD(+) biosynthesis; quinolinate from iminoaspartate: step 1/1. In terms of biological role, catalyzes the condensation of iminoaspartate with dihydroxyacetone phosphate to form quinolinate. This chain is Quinolinate synthase 2, found in Mesorhizobium japonicum (strain LMG 29417 / CECT 9101 / MAFF 303099) (Mesorhizobium loti (strain MAFF 303099)).